We begin with the raw amino-acid sequence, 78 residues long: Serine--glyoxylate aminotransferase (78 aa).

This sequence belongs to the class-V pyridoxal-phosphate-dependent aminotransferase family. In terms of assembly, homodimer. Requires pyridoxal 5'-phosphate as cofactor. As to expression, expressed in leaves but not in root tissue or seedlings.

The protein localises to the peroxisome. It carries out the reaction glyoxylate + L-serine = 3-hydroxypyruvate + glycine. It catalyses the reaction glyoxylate + L-alanine = glycine + pyruvate. With respect to regulation, inhibited by aminooxyacetate. This is Serine--glyoxylate aminotransferase from Triticum aestivum (Wheat).